Consider the following 371-residue polypeptide: Transaldolase (371 aa).

Lys-140 acts as the Schiff-base intermediate with substrate in catalysis.

Belongs to the transaldolase family. Type 2 subfamily.

Its subcellular location is the cytoplasm. It catalyses the reaction D-sedoheptulose 7-phosphate + D-glyceraldehyde 3-phosphate = D-erythrose 4-phosphate + beta-D-fructose 6-phosphate. The protein operates within carbohydrate degradation; pentose phosphate pathway; D-glyceraldehyde 3-phosphate and beta-D-fructose 6-phosphate from D-ribose 5-phosphate and D-xylulose 5-phosphate (non-oxidative stage): step 2/3. In terms of biological role, transaldolase is important for the balance of metabolites in the pentose-phosphate pathway. This is Transaldolase from Frankia alni (strain DSM 45986 / CECT 9034 / ACN14a).